Here is a 156-residue protein sequence, read N- to C-terminus: Cyanate hydratase (156 aa).

Residues Arg-96, Glu-99, and Ser-122 contribute to the active site.

The protein belongs to the cyanase family.

It catalyses the reaction cyanate + hydrogencarbonate + 3 H(+) = NH4(+) + 2 CO2. Functionally, catalyzes the reaction of cyanate with bicarbonate to produce ammonia and carbon dioxide. The polypeptide is Cyanate hydratase (Burkholderia orbicola (strain MC0-3)).